Reading from the N-terminus, the 410-residue chain is Elongation factor Tu (410 aa).

A tr-type G domain is found at 10-214; it reads KPHVNIGTIG…EVDAYIPTPE (205 aa). The interval 19 to 26 is G1; it reads GHVDHGKT. 19–26 lines the GTP pocket; sequence GHVDHGKT. Position 26 (Thr26) interacts with Mg(2+). The segment at 60–64 is G2; it reads GITIN. A G3 region spans residues 81–84; that stretch reads DCPG. Residues 81–85 and 136–139 contribute to the GTP site; these read DCPGH and NKAD. The interval 136–139 is G4; that stretch reads NKAD. The G5 stretch occupies residues 174 to 176; sequence SAL.

It belongs to the TRAFAC class translation factor GTPase superfamily. Classic translation factor GTPase family. EF-Tu/EF-1A subfamily. In terms of assembly, monomer.

It localises to the cytoplasm. The enzyme catalyses GTP + H2O = GDP + phosphate + H(+). GTP hydrolase that promotes the GTP-dependent binding of aminoacyl-tRNA to the A-site of ribosomes during protein biosynthesis. The chain is Elongation factor Tu from Arthrospira platensis (Spirulina platensis).